We begin with the raw amino-acid sequence, 255 residues long: Putative glycyl-radical enzyme activating enzyme MJ1632 (255 aa).

The region spanning 30-245 (SHISLSDKIT…SNVSCSLDFK (216 aa)) is the Radical SAM core domain. Positions 45, 49, and 52 each coordinate [4Fe-4S] cluster. Residues 51–53 (YCF), glycine 88, and 134–136 (DLK) contribute to the S-adenosyl-L-methionine site.

It belongs to the organic radical-activating enzymes family. It depends on [4Fe-4S] cluster as a cofactor.

It carries out the reaction glycyl-[protein] + reduced [flavodoxin] + S-adenosyl-L-methionine = glycin-2-yl radical-[protein] + semiquinone [flavodoxin] + 5'-deoxyadenosine + L-methionine + H(+). The polypeptide is Putative glycyl-radical enzyme activating enzyme MJ1632 (Methanocaldococcus jannaschii (strain ATCC 43067 / DSM 2661 / JAL-1 / JCM 10045 / NBRC 100440) (Methanococcus jannaschii)).